A 100-amino-acid chain; its full sequence is Phosphoribosyl-ATP pyrophosphatase (100 aa).

The protein belongs to the PRA-PH family.

Its subcellular location is the cytoplasm. It carries out the reaction 1-(5-phospho-beta-D-ribosyl)-ATP + H2O = 1-(5-phospho-beta-D-ribosyl)-5'-AMP + diphosphate + H(+). Its pathway is amino-acid biosynthesis; L-histidine biosynthesis; L-histidine from 5-phospho-alpha-D-ribose 1-diphosphate: step 2/9. This Methanopyrus kandleri (strain AV19 / DSM 6324 / JCM 9639 / NBRC 100938) protein is Phosphoribosyl-ATP pyrophosphatase (hisE).